The primary structure comprises 207 residues: Guanylate kinase (207 aa).

The Guanylate kinase-like domain occupies 6–185 (GLLIVLSGPS…AKNRIQCIVE (180 aa)). 13-20 (GPSGVGKG) is a binding site for ATP.

The protein belongs to the guanylate kinase family.

It localises to the cytoplasm. The enzyme catalyses GMP + ATP = GDP + ADP. Its function is as follows. Essential for recycling GMP and indirectly, cGMP. The sequence is that of Guanylate kinase from Staphylococcus aureus (strain bovine RF122 / ET3-1).